We begin with the raw amino-acid sequence, 354 residues long: Divinyl chlorophyll a/b light-harvesting protein PcbG (354 aa).

6 helical membrane-spanning segments follow: residues 27-47 (FIAA…ASTL), 65-85 (IFLA…VWTG), 88-108 (VASV…GALS), 201-221 (VLGG…FHIA), 241-261 (AVLS…AFWC), and 308-328 (LTNV…WHAI).

The protein belongs to the PsbB/PsbC family. IsiA/Pcb subfamily. In terms of assembly, the antenna complex consists of divinyl chlorophylls (a and b) and divinyl chlorophyll a/b binding proteins and binds more divinyl chlorophyll b than does the antenna complex from high-light-adapted Prochlorococcus. Divinyl chlorophyll a serves as cofactor. Requires divinyl chlorophyll b as cofactor.

The protein localises to the cellular thylakoid membrane. Its function is as follows. The antenna complex functions as a light receptor, it captures and delivers excitation energy to photosystems II and I. The Prochlorales pcb genes are not related to higher plant LHCs. This chain is Divinyl chlorophyll a/b light-harvesting protein PcbG (pcbG), found in Prochlorococcus marinus (strain NATL2A).